The primary structure comprises 525 residues: Lysine--tRNA ligase (525 aa).

Positions 430 and 437 each coordinate Mg(2+).

Belongs to the class-II aminoacyl-tRNA synthetase family. In terms of assembly, homodimer. Requires Mg(2+) as cofactor.

It is found in the cytoplasm. The catalysed reaction is tRNA(Lys) + L-lysine + ATP = L-lysyl-tRNA(Lys) + AMP + diphosphate. This is Lysine--tRNA ligase from Chlamydia caviae (strain ATCC VR-813 / DSM 19441 / 03DC25 / GPIC) (Chlamydophila caviae).